We begin with the raw amino-acid sequence, 165 residues long: Transcription antitermination protein NusB (165 aa).

The tract at residues M1 to R27 is disordered. Over residues N10–K21 the composition is skewed to basic and acidic residues.

The protein belongs to the NusB family.

Functionally, involved in transcription antitermination. Required for transcription of ribosomal RNA (rRNA) genes. Binds specifically to the boxA antiterminator sequence of the ribosomal RNA (rrn) operons. This chain is Transcription antitermination protein NusB, found in Pseudomonas syringae pv. tomato (strain ATCC BAA-871 / DC3000).